Consider the following 298-residue polypeptide: Movement protein BC1 (298 aa).

The segment at 253–273 (LPEASLDPGDSVSQTQSMTKK) is disordered.

The protein belongs to the begomovirus movement protein BC1 family. As to quaternary structure, binds to dimeric supercoiled plasmid DNA. Post-translationally, phosphorylated.

Its subcellular location is the host cell membrane. It localises to the host microsome membrane. It is found in the host endoplasmic reticulum membrane. Transports viral genome to neighboring plant cells directly through plasmosdesmata, without any budding. The movement protein allows efficient cell to cell propagation, by bypassing the host cell wall barrier. Begomovirus genome is shuttled out of nucleus by Nuclear shuttle protein (NSP) and the movement protein transports the DNA-NSP complex to cell plasmodesmata and facilitates further movement across the cell wall. The polypeptide is Movement protein BC1 (Hewittia sublobata (Coralbush)).